A 136-amino-acid polypeptide reads, in one-letter code: Serine--glyoxylate aminotransferase (136 aa).

It belongs to the class-V pyridoxal-phosphate-dependent aminotransferase family. Homodimer. It depends on pyridoxal 5'-phosphate as a cofactor. As to expression, expressed in leaves but not in root tissue or seedlings.

The protein localises to the peroxisome. The catalysed reaction is glyoxylate + L-serine = 3-hydroxypyruvate + glycine. It carries out the reaction glyoxylate + L-alanine = glycine + pyruvate. With respect to regulation, inhibited by aminooxyacetate. In Zea mays (Maize), this protein is Serine--glyoxylate aminotransferase.